A 561-amino-acid polypeptide reads, in one-letter code: MAIATSTQLARALYDNTAESPQELSFRRGDVLRVLQREGAGGLDGWCLCSLHGQQGIVPANRVKLLPAGPAPKPSLSPASPAQPGSPYPAPDHSNEDQEVYVVPPPARPCPTSGPPAGPCPPSPDLIYKIPRASGTQLAAPRDALEVYDVPPTALRVPSSGPYDCPASFSHPLTRVAPQPPGEDDAPYDVPLTPKPPAELEPDLEWEGGREPGPPIYAAPSNLKRASALLNLYEAPEELLADGEGGGTDEGIYDVPLLGPEAPPSPEPPGALASHDQDTLAQLLARSPPPPHRPRLPSAESLSRRPLPALPVPEAPSPSPVPSPAPGRKGSIQDRPLPPPPPRLPGYGGPKVEGDPEGREMEDDPAGHHNEYEGIPMAEEYDYVHLKGMDKAQGSRPPDQACTGDPELPERGMPAPQEALSPGEPLVVSTGDLQLLYFYAGQCQSHYSALQAAVAALMSSTQANQPPRLFVPHSKRVVVAAHRLVFVGDTLGRLAASAPLRAQVRAAGTALGQALRATVLAVKGAALGYPSSPAIQEMVQCVTELAGQALQFTTLLTSLAP.

An SH3 domain is found at 5-68 (TSTQLARALY…PANRVKLLPA (64 aa)). Disordered regions lie at residues 68-123 (AGPA…CPPS), 171-215 (HPLT…PGPP), 240-372 (LADG…HNEY), and 390-422 (DKAQ…ALSP). The segment covering 103-123 (VPPPARPCPTSGPPAGPCPPS) has biased composition (pro residues). Phosphotyrosine; by SRC is present on tyrosine 253. Short sequence motifs (SH3-binding) lie at residues 305 to 311 (RPLPALP) and 335 to 341 (RPLPPPP). The segment covering 308-325 (PALPVPEAPSPSPVPSPA) has biased composition (pro residues). Basic and acidic residues predominate over residues 352–372 (VEGDPEGREMEDDPAGHHNEY). A divergent helix-loop-helix motif region spans residues 438 to 488 (FYAGQCQSHYSALQAAVAALMSSTQANQPPRLFVPHSKRVVVAAHRLVFVG).

This sequence belongs to the CAS family. Post-translationally, phosphorylated on multiple tyrosine residues. Phosphorylated on tyrosines by FYN and SRC. In terms of tissue distribution, the protein has been detected in lung and placenta.

Docking protein which plays a central coordinating role for tyrosine-kinase-based signaling related to cell adhesion. May serve as an activator of SRC and a downstream effector. Interacts with the SH3 domain of FYN and with CRK, SRC, and YES. This Homo sapiens (Human) protein is Embryonal Fyn-associated substrate (EFS).